The following is a 942-amino-acid chain: Protein ZDS2 (942 aa).

A disordered region spans residues 1–28 (MVLMEDMQNKDGHNTVENSSGGTDSNNN). A compositionally biased stretch (polar residues) spans 15–28 (TVENSSGGTDSNNN). Ser50 is subject to Phosphoserine. 5 disordered regions span residues 91 to 142 (SRNS…DDSI), 483 to 541 (SQES…NSSN), 617 to 654 (VVSSSESQPSKPTAPAVVEKKVELPTDTQASTHKKNSL), 682 to 728 (VKKE…DIDT), and 788 to 817 (SRDTTAGLEEDIGAEREDNTSPTAPQISTL). Residues 99 to 122 (SSKESLQESLHEENIIRSEQKEEQ) are compositionally biased toward basic and acidic residues. The span at 123–134 (GSEDNDAYEEGD) shows a compositional bias: acidic residues. Low complexity-rich tracts occupy residues 483-497 (SQESSLLSTDSSNNS), 518-541 (SSSEKSNTNNSEANHGWSWLNSSN), and 617-627 (VVSSSESQPSK). Residues 682–704 (VKKELKKKASHSSLSKFRKSPKK) are compositionally biased toward basic residues. The span at 807-816 (TSPTAPQIST) shows a compositional bias: polar residues.

The protein to yeast ZDS1/NRC1/CES1. In terms of assembly, interacts with SKG6.

Functionally, acts as a negative regulator of polarized growth via an alternative mechanism to ZDS1. In heat-stressed cells appears to play a role in localizing BCY1 to the cytoplasm. Seems to interact with, and down-regulate, CDC42. Also acts as a suppressor of PKC1. May act as an integration point for distinct signaling pathways helping to maintain a balance among these different pathways. This chain is Protein ZDS2 (ZDS2), found in Saccharomyces cerevisiae (strain ATCC 204508 / S288c) (Baker's yeast).